The chain runs to 106 residues: Small ribosomal subunit protein uS10 (106 aa).

Belongs to the universal ribosomal protein uS10 family. In terms of assembly, part of the 30S ribosomal subunit.

Involved in the binding of tRNA to the ribosomes. This chain is Small ribosomal subunit protein uS10, found in Pyrobaculum arsenaticum (strain DSM 13514 / JCM 11321 / PZ6).